The following is a 411-amino-acid chain: Lissencephaly-1 homolog (411 aa).

Positions Gln9 to Thr41 constitute a LisH domain. Positions Thr56–Ala83 form a coiled coil. 7 WD repeats span residues Gly106–Lys147, Gly148–Lys187, Gly191–Thr230, Gly233–Glu272, Asp275–Thr334, Gly337–Thr376, and Ala379–Arg411.

It belongs to the WD repeat LIS1/nudF family.

The protein resides in the cytoplasm. It is found in the cytoskeleton. The protein localises to the microtubule organizing center. Its subcellular location is the centrosome. Functionally, positively regulates the activity of the minus-end directed microtubule motor protein dynein. May enhance dynein-mediated microtubule sliding by targeting dynein to the microtubule plus end. Required for several dynein- and microtubule-dependent processes. The chain is Lissencephaly-1 homolog from Drosophila sechellia (Fruit fly).